A 242-amino-acid polypeptide reads, in one-letter code: 7-cyano-7-deazaguanine synthase (242 aa).

14-24 (FSGGQDSATCL) serves as a coordination point for ATP. Zn(2+) contacts are provided by cysteine 202, cysteine 217, cysteine 220, and cysteine 223.

The protein belongs to the QueC family. It depends on Zn(2+) as a cofactor.

The enzyme catalyses 7-carboxy-7-deazaguanine + NH4(+) + ATP = 7-cyano-7-deazaguanine + ADP + phosphate + H2O + H(+). It functions in the pathway purine metabolism; 7-cyano-7-deazaguanine biosynthesis. Catalyzes the ATP-dependent conversion of 7-carboxy-7-deazaguanine (CDG) to 7-cyano-7-deazaguanine (preQ(0)). This is 7-cyano-7-deazaguanine synthase from Rhodopseudomonas palustris (strain BisA53).